The following is a 549-amino-acid chain: T-complex protein 1 subunit theta (549 aa).

Belongs to the TCP-1 chaperonin family. Heterooligomeric complex of about 850 to 900 kDa that forms two stacked rings, 12 to 16 nm in diameter. Interacts with CCT3, KNAT1, STM and TTG1. Expressed in shoot meristems, root tip, vasculature and leaf epidermis.

It is found in the cytoplasm. In terms of biological role, molecular chaperone; assists the folding of proteins upon ATP hydrolysis. Known to play a role, in vitro, in the folding of actin and tubulin. Contributes to stem cell maintenance through its impact on transcription factors trafficking through plasmodesmata. Probably involved in refolding translocated, partially unfolded proteins, including viral movement proteins. This Arabidopsis thaliana (Mouse-ear cress) protein is T-complex protein 1 subunit theta.